The primary structure comprises 186 residues: UPF0669 protein C6orf120 homolog (186 aa).

The signal sequence occupies residues 1–19; it reads MVPFWAGLLVLSALPQTLG. Asn47 is a glycosylation site (N-linked (GlcNAc...) asparagine). The interval 141-165 is disordered; that stretch reads KNSYSSDETPGQPRQSQGPEDTEEE. Residues 142–159 show a composition bias toward polar residues; sequence NSYSSDETPGQPRQSQGP.

This sequence belongs to the UPF0669 family.

The protein localises to the secreted. The polypeptide is UPF0669 protein C6orf120 homolog (Danio rerio (Zebrafish)).